A 474-amino-acid polypeptide reads, in one-letter code: Glutamine synthetase (474 aa).

Positions 14–99 (EKIELIDLKF…VCSIKEPRTG (86 aa)) constitute a GS beta-grasp domain. Positions 106–474 (PRVIAQKAID…PYEFSIYYDV (369 aa)) constitute a GS catalytic domain. Residues Glu131 and Glu133 each coordinate Mg(2+). Glu211 lines the ATP pocket. Mg(2+) is bound by residues Glu216 and Glu224. L-glutamate-binding positions include 268 to 269 (NG) and Gly269. Mg(2+) is bound at residue His273. ATP contacts are provided by residues 275–277 (HQS) and Ser277. L-glutamate-binding residues include Arg325, Glu331, and Arg343. Residues Arg343, Arg348, and Lys357 each coordinate ATP. Glu362 lines the Mg(2+) pocket. Residue Arg364 participates in L-glutamate binding. Tyr402 carries the O-AMP-tyrosine modification.

The protein belongs to the glutamine synthetase family. In terms of assembly, oligomer of 12 subunits arranged in the form of two hexagons. Mg(2+) is required as a cofactor.

The protein resides in the cytoplasm. It catalyses the reaction L-glutamate + NH4(+) + ATP = L-glutamine + ADP + phosphate + H(+). The activity of this enzyme could be controlled by adenylation under conditions of abundant glutamine. Functionally, involved in nitrogen metabolism via ammonium assimilation. Catalyzes the ATP-dependent biosynthesis of glutamine from glutamate and ammonia. The chain is Glutamine synthetase from Nostoc sp. (strain PCC 7120 / SAG 25.82 / UTEX 2576).